A 337-amino-acid polypeptide reads, in one-letter code: Glycerol-3-phosphate dehydrogenase [NAD(P)+] (337 aa).

The NADPH site is built by Trp12 and Lys107. 3 residues coordinate sn-glycerol 3-phosphate: Lys107, Gly138, and Thr140. An NADPH-binding site is contributed by Ala142. The sn-glycerol 3-phosphate site is built by Lys193, Asp246, Ser256, Arg257, and Asn258. The active-site Proton acceptor is the Lys193. Arg257 provides a ligand contact to NADPH. Positions 282 and 284 each coordinate NADPH.

Belongs to the NAD-dependent glycerol-3-phosphate dehydrogenase family.

The protein resides in the cytoplasm. The enzyme catalyses sn-glycerol 3-phosphate + NAD(+) = dihydroxyacetone phosphate + NADH + H(+). It carries out the reaction sn-glycerol 3-phosphate + NADP(+) = dihydroxyacetone phosphate + NADPH + H(+). The protein operates within membrane lipid metabolism; glycerophospholipid metabolism. In terms of biological role, catalyzes the reduction of the glycolytic intermediate dihydroxyacetone phosphate (DHAP) to sn-glycerol 3-phosphate (G3P), the key precursor for phospholipid synthesis. The chain is Glycerol-3-phosphate dehydrogenase [NAD(P)+] from Koribacter versatilis (strain Ellin345).